The primary structure comprises 572 residues: Proline--tRNA ligase (572 aa).

The protein belongs to the class-II aminoacyl-tRNA synthetase family. ProS type 1 subfamily. As to quaternary structure, homodimer.

Its subcellular location is the cytoplasm. It carries out the reaction tRNA(Pro) + L-proline + ATP = L-prolyl-tRNA(Pro) + AMP + diphosphate. Functionally, catalyzes the attachment of proline to tRNA(Pro) in a two-step reaction: proline is first activated by ATP to form Pro-AMP and then transferred to the acceptor end of tRNA(Pro). As ProRS can inadvertently accommodate and process non-cognate amino acids such as alanine and cysteine, to avoid such errors it has two additional distinct editing activities against alanine. One activity is designated as 'pretransfer' editing and involves the tRNA(Pro)-independent hydrolysis of activated Ala-AMP. The other activity is designated 'posttransfer' editing and involves deacylation of mischarged Ala-tRNA(Pro). The misacylated Cys-tRNA(Pro) is not edited by ProRS. The chain is Proline--tRNA ligase from Shewanella amazonensis (strain ATCC BAA-1098 / SB2B).